The chain runs to 2465 residues: Protein DOP1A (2465 aa).

3 disordered regions span residues 559–600 (PSGQ…SSES), 625–646 (GAAA…TVGS), and 705–733 (TEHQ…KEKN). Residues 633–646 (STSSETETASTVGS) show a composition bias toward low complexity. Basic and acidic residues predominate over residues 707-733 (HQGDLGREQGETSKWDRNSQGDVKEKN). Residue Ser-1266 is modified to Phosphoserine. Composition is skewed to basic and acidic residues over residues 1282 to 1291 (EKETIVKESG) and 1305 to 1315 (KKDDDKKKSSN). The segment at 1282-1315 (EKETIVKESGKQPGAKPKVKLARKKDDDKKKSSN) is disordered.

It belongs to the DOP1 family.

The protein resides in the golgi apparatus membrane. May be involved in protein traffic between late Golgi and early endosomes. This Homo sapiens (Human) protein is Protein DOP1A.